The sequence spans 74 residues: Protein WFDC9 (74 aa).

The first 19 residues, 1 to 19 (MKFWILLLTVSAHGIVVFL), serve as a signal peptide directing secretion.

The protein resides in the secreted. The chain is Protein WFDC9 (Wfdc9) from Rattus norvegicus (Rat).